The chain runs to 219 residues: tRNA (guanine-N(7)-)-methyltransferase (219 aa).

S-adenosyl-L-methionine contacts are provided by glutamate 46, glutamate 71, asparagine 100, and aspartate 122. Aspartate 122 is a catalytic residue. Substrate-binding positions include lysine 126, aspartate 158, and 199–202 (TEYE).

Belongs to the class I-like SAM-binding methyltransferase superfamily. TrmB family.

The enzyme catalyses guanosine(46) in tRNA + S-adenosyl-L-methionine = N(7)-methylguanosine(46) in tRNA + S-adenosyl-L-homocysteine. Its pathway is tRNA modification; N(7)-methylguanine-tRNA biosynthesis. In terms of biological role, catalyzes the formation of N(7)-methylguanine at position 46 (m7G46) in tRNA. This is tRNA (guanine-N(7)-)-methyltransferase from Leuconostoc citreum (strain KM20).